Here is a 368-residue protein sequence, read N- to C-terminus: Peptide chain release factor 2 (368 aa).

Residues Glu-36–Ser-56 form a disordered region. Gln-250 bears the N5-methylglutamine mark.

Belongs to the prokaryotic/mitochondrial release factor family. In terms of processing, methylated by PrmC. Methylation increases the termination efficiency of RF2.

Its subcellular location is the cytoplasm. Functionally, peptide chain release factor 2 directs the termination of translation in response to the peptide chain termination codons UGA and UAA. In Corynebacterium aurimucosum (strain ATCC 700975 / DSM 44827 / CIP 107346 / CN-1) (Corynebacterium nigricans), this protein is Peptide chain release factor 2.